Consider the following 413-residue polypeptide: ATP-dependent RNA helicase RhlB (413 aa).

The Q motif signature appears at 9–37 (QRFADLPLHPQILAALNDQNFEYCTPIQA). The region spanning 40 to 217 (LPLTLQGKDV…FEDMNDPEYI (178 aa)) is the Helicase ATP-binding domain. An ATP-binding site is contributed by 53-60 (AQTGTGKT). A DEAD box motif is present at residues 163–166 (DEAD). In terms of domain architecture, Helicase C-terminal spans 241–388 (KMALLMTLLE…VSQYDPDSLI (148 aa)).

Belongs to the DEAD box helicase family. RhlB subfamily. Component of the RNA degradosome, which is a multiprotein complex involved in RNA processing and mRNA degradation.

It is found in the cytoplasm. It carries out the reaction ATP + H2O = ADP + phosphate + H(+). DEAD-box RNA helicase involved in RNA degradation. Has RNA-dependent ATPase activity and unwinds double-stranded RNA. The protein is ATP-dependent RNA helicase RhlB of Actinobacillus succinogenes (strain ATCC 55618 / DSM 22257 / CCUG 43843 / 130Z).